The chain runs to 622 residues: Galactolipid galactosyltransferase SFR2, chloroplastic (622 aa).

The Stromal segment spans residues 1 to 3 (MEL). Residues 4–24 (FALLIKVAGLLATVTVGANVV) form a helical; Signal-anchor membrane-spanning segment. Residues 25-622 (SYSRFRRQNL…LHPALASPFD (598 aa)) are Cytoplasmic-facing. A beta-D-glucoside contacts are provided by residues histidine 222, 266–267 (NE), tyrosine 377, glutamate 429, tryptophan 467, 474–475 (EW), and phenylalanine 483. Residue glutamate 267 is the Proton donor of the active site. Glutamate 429 (nucleophile) is an active-site residue.

The protein belongs to the glycosyl hydrolase 1 family. As to expression, expressed in hypocotyls, cotyledons, stems, leaves, pedicels, sepals, anthers and pistils. Limited expression in roots. Not detected in petals or filaments.

It localises to the plastid. Its subcellular location is the chloroplast. The protein localises to the chloroplast outer membrane. It carries out the reaction 2 a 1,2-diacyl-3-O-(beta-D-galactosyl)-sn-glycerol = a 1,2-diacyl-3-O-[beta-D-galactosyl-(1-&gt;6)-beta-D-galactosyl]-sn-glycerol + a 1,2-diacyl-sn-glycerol. Induced by MgCl(2). Its function is as follows. Glycosyl hydrolase family protein acting primarily as a highly specific galactosyltransferase. Synthesizes digalactosyldiacylglycerol from monogalactosyldiacylglycerol in the absence of UDP-galactose in vitro. Hydrolyzes o- and p-nitrophenyl beta-D-glucoside in vitro. Plays a role in freezing tolerance. May play a role in chloroplast protection. In Arabidopsis thaliana (Mouse-ear cress), this protein is Galactolipid galactosyltransferase SFR2, chloroplastic.